Reading from the N-terminus, the 61-residue chain is Small ribosomal subunit protein bS21 (61 aa).

It belongs to the bacterial ribosomal protein bS21 family.

This is Small ribosomal subunit protein bS21 from Methylacidiphilum infernorum (isolate V4) (Methylokorus infernorum (strain V4)).